Reading from the N-terminus, the 145-residue chain is Small ribosomal subunit protein uS19 (145 aa).

Alanine 2 carries the post-translational modification N-acetylalanine. Lysine 108 is covalently cross-linked (Glycyl lysine isopeptide (Lys-Gly) (interchain with G-Cter in SUMO2)).

Belongs to the universal ribosomal protein uS19 family. In terms of assembly, component of the small ribosomal subunit.

Its subcellular location is the cytoplasm. In terms of biological role, component of the small ribosomal subunit. The ribosome is a large ribonucleoprotein complex responsible for the synthesis of proteins in the cell. This chain is Small ribosomal subunit protein uS19 (RPS15), found in Oryctolagus cuniculus (Rabbit).